The primary structure comprises 397 residues: Lysophospholipid transporter LplT (397 aa).

Residues 1 to 17 are Periplasmic-facing; it reads MSESVHTNTSLWSKGMK. A helical membrane pass occupies residues 18–38; it reads AVIVAQFLSAFGDNALLFATL. Residues 39 to 52 lie on the Cytoplasmic side of the membrane; the sequence is ALLKAQFYPEWSQP. Residues 53–73 form a helical membrane-spanning segment; that stretch reads ILQMVFVGAYILFAPFVGQVA. Topologically, residues 74 to 90 are periplasmic; that stretch reads DSFAKGRVMMFANGLKL. The chain crosses the membrane as a helical span at residues 91-111; sequence LGAASICFGINPFLGYTLVGV. Topologically, residues 112-144 are cytoplasmic; sequence GAAAYSPAKYGILGELTTGSKLVKANGLMEAST. Residues 145-165 traverse the membrane as a helical segment; it reads IAAILLGSVAGGVLADWHVLV. Residue Ala-166 is a topological domain, periplasmic. The chain crosses the membrane as a helical span at residues 167–187; it reads LAACALAYGGAVVANIYIPKL. Over 188–226 the chain is Cytoplasmic; it reads AAARPGQSWNLINMTRSFLNACTSLWRNGETRFSLVGTS. The helical transmembrane segment at 227–247 threads the bilayer; that stretch reads LFWGAGVTLRFLLVLWVPVAL. Over 248 to 256 the chain is Periplasmic; sequence GITDNATPT. Residues 257–277 form a helical membrane-spanning segment; that stretch reads YLNAMVAIGIVVGAGAAAKLV. Residues 278-280 lie on the Cytoplasmic side of the membrane; that stretch reads TLE. The chain crosses the membrane as a helical span at residues 281–301; it reads TVSRCMPAGILIGVVVLIFSL. The Periplasmic segment spans residues 302–304; sequence QHE. A helical transmembrane segment spans residues 305–325; that stretch reads LLPAYALLMLIGVLGGFFVVP. Over 326–343 the chain is Cytoplasmic; that stretch reads LNALLQERGKKSVGAGNA. The chain crosses the membrane as a helical span at residues 344–364; sequence IAVQNLGENSAMLLMLGIYSL. Residues 365–366 lie on the Periplasmic side of the membrane; sequence AV. Residues 367–387 traverse the membrane as a helical segment; that stretch reads MVGIPVVPIGIGFGALFALAI. Topologically, residues 388 to 397 are cytoplasmic; it reads TALWIWQRRY.

It belongs to the major facilitator superfamily. LplT (TC 2.A.1.42) family.

It is found in the cell inner membrane. Its function is as follows. Catalyzes the facilitated diffusion of 2-acyl-glycero-3-phosphoethanolamine (2-acyl-GPE) into the cell. This chain is Lysophospholipid transporter LplT, found in Escherichia coli O127:H6 (strain E2348/69 / EPEC).